A 397-amino-acid polypeptide reads, in one-letter code: Protein PEP-RELATED DEVELOPMENT ARRESTED 1, chloroplastic (397 aa).

The transit peptide at 1-52 (MLQSIHLRFSSTPSPSKRESLIIPSVICSFPFTSSSFRPKQTQKLKRLVQFC) directs the protein to the chloroplast. Over residues 315–334 (KDEGADNLSKEDDSSTEGRK) the composition is skewed to basic and acidic residues. The tract at residues 315–351 (KDEGADNLSKEDDSSTEGRKPSGLNGRGSVTGRKPLP) is disordered.

As to quaternary structure, interacts with FSD2 and MRL7. Highly expressed in young leaves, shoots and flowers. Expressed at low levels in stems and siliques.

It is found in the plastid. Its subcellular location is the chloroplast stroma. The protein localises to the chloroplast nucleoid. In terms of biological role, plays an essential role in early steps of chloroplast development. May be involved in the redox control of plastid gene expression by maintening the redox state around chloroplast nucleoids. May positively regulate plastid-encoded RNA polymerase (PEP) activity, through binding to FSD2. In Arabidopsis thaliana (Mouse-ear cress), this protein is Protein PEP-RELATED DEVELOPMENT ARRESTED 1, chloroplastic (PRDA1).